The primary structure comprises 251 residues: Ribonuclease 3 (251 aa).

The region spanning 3–125 (LATLETRLGH…LFGAVFLDAG (123 aa)) is the RNase III domain. Glu-38 is a Mg(2+) binding site. Asp-42 is a catalytic residue. Mg(2+) is bound by residues Asp-111 and Glu-114. Glu-114 is an active-site residue. The region spanning 152–222 (DAKTLLQEFL…AKLALEAALV (71 aa)) is the DRBM domain.

This sequence belongs to the ribonuclease III family. Homodimer. Requires Mg(2+) as cofactor.

The protein localises to the cytoplasm. The catalysed reaction is Endonucleolytic cleavage to 5'-phosphomonoester.. Functionally, digests double-stranded RNA. Involved in the processing of primary rRNA transcript to yield the immediate precursors to the large and small rRNAs (23S and 16S). Processes some mRNAs, and tRNAs when they are encoded in the rRNA operon. Processes pre-crRNA and tracrRNA of type II CRISPR loci if present in the organism. This Bordetella avium (strain 197N) protein is Ribonuclease 3.